Here is an 845-residue protein sequence, read N- to C-terminus: Beta-mannosidase B (845 aa).

The Proton donor role is filled by Glu-432. Residues Asn-717 and Asn-723 are each glycosylated (N-linked (GlcNAc...) asparagine).

It belongs to the glycosyl hydrolase 2 family. Beta-mannosidase B subfamily.

The enzyme catalyses Hydrolysis of terminal, non-reducing beta-D-mannose residues in beta-D-mannosides.. It participates in glycan metabolism; N-glycan degradation. In terms of biological role, exoglycosidase that cleaves the single beta-linked mannose residue from the non-reducing end of beta-mannosidic oligosaccharides of various complexity and length. Prefers mannobiose over mannotriose and has no activity against polymeric mannan. Is also severely restricted by galactosyl substitutions at the +1 subsite. This chain is Beta-mannosidase B (mndB), found in Aspergillus clavatus (strain ATCC 1007 / CBS 513.65 / DSM 816 / NCTC 3887 / NRRL 1 / QM 1276 / 107).